Here is a 314-residue protein sequence, read N- to C-terminus: Nodulation protein D 2 (314 aa).

An HTH lysR-type domain is found at 6 to 63; it reads LDLNLLVVLDALMTERNLTAAARSINLSQPAMSAAVARLRTNFRDDLFAMAGREFIPT. Residues 23-42 constitute a DNA-binding region (H-T-H motif); it reads LTAAARSINLSQPAMSAAVA.

This sequence belongs to the LysR transcriptional regulatory family.

NodD regulates the expression of the nodABCFE genes which encode other nodulation proteins. NodD is also a negative regulator of its own expression. Binds flavonoids as inducers. This Rhizobium tropici protein is Nodulation protein D 2 (nodD2).